A 103-amino-acid polypeptide reads, in one-letter code: Co-chaperonin GroES (103 aa).

It belongs to the GroES chaperonin family. In terms of assembly, heptamer of 7 subunits arranged in a ring. Interacts with the chaperonin GroEL.

It is found in the cytoplasm. Its function is as follows. Together with the chaperonin GroEL, plays an essential role in assisting protein folding. The GroEL-GroES system forms a nano-cage that allows encapsulation of the non-native substrate proteins and provides a physical environment optimized to promote and accelerate protein folding. GroES binds to the apical surface of the GroEL ring, thereby capping the opening of the GroEL channel. This is Co-chaperonin GroES from Prochlorococcus marinus (strain MIT 9313).